Here is a 955-residue protein sequence, read N- to C-terminus: 2-oxoglutarate dehydrogenase E1 component (955 aa).

It belongs to the alpha-ketoglutarate dehydrogenase family. Homodimer. Part of the 2-oxoglutarate dehydrogenase (OGDH) complex composed of E1 (2-oxoglutarate dehydrogenase), E2 (dihydrolipoamide succinyltransferase) and E3 (dihydrolipoamide dehydrogenase); the complex contains multiple copies of the three enzymatic components (E1, E2 and E3). The cofactor is thiamine diphosphate.

The catalysed reaction is N(6)-[(R)-lipoyl]-L-lysyl-[protein] + 2-oxoglutarate + H(+) = N(6)-[(R)-S(8)-succinyldihydrolipoyl]-L-lysyl-[protein] + CO2. E1 component of the 2-oxoglutarate dehydrogenase (OGDH) complex which catalyzes the decarboxylation of 2-oxoglutarate, the first step in the conversion of 2-oxoglutarate to succinyl-CoA and CO(2). This Bacillus cereus (strain ZK / E33L) protein is 2-oxoglutarate dehydrogenase E1 component.